We begin with the raw amino-acid sequence, 259 residues long: Methyltransferase sdnD (259 aa).

Belongs to the FkbM methyltransferase family.

It participates in antibiotic biosynthesis. Its function is as follows. Methyltransferase; part of the gene cluster that mediates the biosynthesis of sordarin and hypoxysordarin, glycoside antibiotics with a unique tetracyclic diterpene aglycone structure. First, the geranylgeranyl diphosphate synthase sdnC constructs GGDP from farnesyl diphosphate and isopentenyl diphosphate. The diterpene cyclase sdnA then catalyzes the cyclization of GGDP to afford cycloaraneosene. Cycloaraneosene is then hydroxylated four times by the putative cytochrome P450 monooxygenases sdnB, sdnE, sdnF and sdnH to give a hydroxylated cycloaraneosene derivative such as cycloaraneosene-8,9,13,19-tetraol. Although the order of the hydroxylations is unclear, at least C8, C9 and C13 of the cycloaraneosene skeleton are hydroxylated before the sordaricin formation. Dehydration of the 13-hydroxy group of the hydroxylated cycloaraneosene derivative might be catalyzed by an unassigned hypothetical protein such as sdnG and sdnP to construct the cyclopentadiene moiety. The FAD-dependent oxidoreductase sdnN is proposed to catalyze the oxidation at C9 of the hydroxylated cycloaraneosene derivative and also catalyze the Baeyer-Villiger oxidation to give the lactone intermediate. The presumed lactone intermediate would be hydrolyzed to give an acrolein moiety and a carboxylate moiety. Then, [4+2]cycloaddition would occur between the acrolein moiety and the cyclopentadiene moiety to give sordaricin. SdnN might also be involved in the [4+2]cycloaddition after the hypothesized oxidation to accommodate the oxidized product and prompt the [4+2]cycloaddition. GDP-6-deoxy-D-altrose may be biosynthesized from GDP-D-mannose by the putative GDP-mannose-4,6-dehydratase sdnI and the short-chain dehydrogenase sdnK. The glycosyltransferase sdnJ catalyzes the attachment of 6-deoxy-D-altrose onto the 19-hydroxy group of sordaricin to give 4'-O-demethylsordarin. The methyltransferase sdnD would complete the biosynthesis of sordarin. Sordarin can be further modified into hypoxysordarin. The unique acyl chain at the 3'-hydroxy group of hypoxysordarin would be constructed by an iterative type I PKS sdnO and the trans-acting polyketide methyltransferase sdnL. SdnL would be responsible for the introduction of an alpha-methyl group of the polyketide chain. Alternatively, the beta-lactamase-like protein sdnR might be responsible for the cleavage and transfer of the polyketide chain from the PKS sdnO to sordarin. Two putative cytochrome P450 monooxygenases, sdnQ and sdnT, might catalyze the epoxidations of the polyketide chain to complete the biosynthesis of hypoxysordarin. Transcriptional regulators sdnM and sdnS are presumably encoded for the transcriptional regulation of the expression of the sdn gene cluster. This chain is Methyltransferase sdnD, found in Sordaria araneosa (Pleurage araneosa).